The following is a 391-amino-acid chain: Phosphoglycerate kinase (391 aa).

Substrate contacts are provided by residues 21 to 23 (DLN), Arg-36, 59 to 62 (HLGR), Arg-113, and Arg-146. ATP-binding positions include Lys-197, Glu-319, and 345–348 (GGDT).

The protein belongs to the phosphoglycerate kinase family. In terms of assembly, monomer.

The protein resides in the cytoplasm. The catalysed reaction is (2R)-3-phosphoglycerate + ATP = (2R)-3-phospho-glyceroyl phosphate + ADP. The protein operates within carbohydrate degradation; glycolysis; pyruvate from D-glyceraldehyde 3-phosphate: step 2/5. In Shewanella baltica (strain OS223), this protein is Phosphoglycerate kinase.